A 194-amino-acid polypeptide reads, in one-letter code: Peptidyl-tRNA hydrolase (194 aa).

Tyr17 is a tRNA binding site. The Proton acceptor role is filled by His22. TRNA is bound by residues Tyr68, Asn70, and Asn115.

The protein belongs to the PTH family. As to quaternary structure, monomer.

The protein localises to the cytoplasm. It catalyses the reaction an N-acyl-L-alpha-aminoacyl-tRNA + H2O = an N-acyl-L-amino acid + a tRNA + H(+). In terms of biological role, hydrolyzes ribosome-free peptidyl-tRNAs (with 1 or more amino acids incorporated), which drop off the ribosome during protein synthesis, or as a result of ribosome stalling. Functionally, catalyzes the release of premature peptidyl moieties from peptidyl-tRNA molecules trapped in stalled 50S ribosomal subunits, and thus maintains levels of free tRNAs and 50S ribosomes. The polypeptide is Peptidyl-tRNA hydrolase (Pseudoalteromonas atlantica (strain T6c / ATCC BAA-1087)).